A 445-amino-acid polypeptide reads, in one-letter code: D-serine transporter DsdX (445 aa).

12 helical membrane-spanning segments follow: residues 5–25, 29–49, 57–77, 106–126, 140–160, 178–198, 224–244, 265–285, 302–322, 343–363, 385–405, and 425–445; these read IWVV…IVKF, PFLA…MGPL, SGIG…TILG, VLVG…VLLI, LLKL…VVPP, VIVY…PLFL, TLPS…LMLV, IGNP…VLGI, FGSI…NAIL, ILLA…ATVA, IIAI…DSLF, and TATF…SFII.

Belongs to the GntP permease family.

Its subcellular location is the cell inner membrane. Uptake of D-serine is inhibited by carbonyl cyanide m-chlorophenylhydrazone (CCCP), and at high concentrations of D-threonine, stimulated by D-cycloserine and not affected by D-alanine or glycine. Its function is as follows. Protein that allows transport of D-serine across the inner membrane, does not transport D-alanine nor probably glycine. Is probably a H(+) symporter, as CCCP inhibits transport. Transports D-serine more efficiently than CycA. This chain is D-serine transporter DsdX (dsdX), found in Escherichia coli O6:H1 (strain CFT073 / ATCC 700928 / UPEC).